A 131-amino-acid chain; its full sequence is PDZ domain-containing protein C52A11.3 (131 aa).

Positions 51 to 127 (LVKLQKDANR…RLYLQIARPH (77 aa)) constitute a PDZ domain.

In Caenorhabditis elegans, this protein is PDZ domain-containing protein C52A11.3.